Here is a 1779-residue protein sequence, read N- to C-terminus: Collagen alpha-1(IV) chain (1779 aa).

A signal peptide spans 1-23 (MLPFWKRLLYAAVIAGALVGADA). Asn-72 carries an N-linked (GlcNAc...) asparagine glycan. Disordered stretches follow at residues 89–643 (GNRG…KPAL), 655–1187 (DKGY…LPGL), 1200–1285 (TGAP…IGPR), and 1336–1530 (GLPG…RGYE). A compositionally biased stretch (low complexity) spans 144 to 163 (QAGVPGVQGPAGNPGAPGIN). 2 stretches are compositionally biased toward basic and acidic residues: residues 196-217 (KGEKGEPAKENGDYAKGEKGEP) and 249-259 (PRGEHGLKGEK). Residues 360–369 (PGLNGLPGNP) show a composition bias toward low complexity. A compositionally biased stretch (gly residues) spans 434–443 (GQKGGAGLPG). A compositionally biased stretch (low complexity) spans 531-545 (GRPGTPGAAGAPGQK). The segment covering 724-747 (PGFHGRDGAKGDKGSFGRSGEKGE) has biased composition (basic and acidic residues). 2 stretches are compositionally biased toward low complexity: residues 913–931 (VGPIGPAGVAGPPGVPGID) and 1015–1036 (PGLMGIKGDQGLAGAPGQQGLD). The segment covering 1106–1127 (EKGDQGRSGIDGRDGINGEKGE) has biased composition (basic and acidic residues). Residues 1151 to 1170 (APGMDGLPGAAGAPGAVGYP) show a composition bias toward low complexity. 3 stretches are compositionally biased toward basic and acidic residues: residues 1224–1245 (IRGDKGSQGERGYTGEKGEQGE), 1496–1505 (ERGEKGERGL), and 1517–1529 (PKGDRGEPGERGY). Residues 1555-1778 (GILITRHSQS…SRCQVCMKNS (224 aa)) form the Collagen IV NC1 domain. 6 cysteine pairs are disulfide-bonded: Cys-1570-Cys-1659, Cys-1603-Cys-1656, Cys-1615-Cys-1621, Cys-1678-Cys-1774, Cys-1712-Cys-1771, and Cys-1724-Cys-1731.

This sequence belongs to the type IV collagen family. As to quaternary structure, trimers of two alpha 1(IV) and one alpha 2(IV) chain. Type IV collagen forms a mesh-like network linked through intermolecular interactions between 7S domains and between NC1 domains. In terms of processing, prolines at the third position of the tripeptide repeating unit (G-X-Y) are hydroxylated in some or all of the chains. Type IV collagens contain numerous cysteine residues which are involved in inter- and intramolecular disulfide bonding. 12 of these, located in the NC1 domain, are conserved in all known type IV collagens.

It is found in the secreted. The protein resides in the extracellular space. Its subcellular location is the extracellular matrix. It localises to the basement membrane. Functionally, collagen type IV is specific for basement membranes. This chain is Collagen alpha-1(IV) chain, found in Drosophila melanogaster (Fruit fly).